The sequence spans 281 residues: 39kDa core protein OPG130 (281 aa).

Residues 1–22 (MDFFNKFSQGLAESSTPKSSIY) are compositionally biased toward polar residues. Disordered stretches follow at residues 1 to 33 (MDFFNKFSQGLAESSTPKSSIYYSEEKDPDTKK), 91 to 112 (ILLPSSTAPTPKPRQQTNTSSD), and 149 to 192 (NKDQ…PQPP). Basic and acidic residues predominate over residues 24 to 33 (SEEKDPDTKK). Over residues 94-112 (PSSTAPTPKPRQQTNTSSD) the composition is skewed to polar residues. The span at 154–175 (TTTPPSTQPSQTLPTTTCTQQS) shows a compositional bias: low complexity.

Belongs to the orthopoxvirus OPG130 family. Interacts with OPG136 and its cleaved form. Post-translationally, its phosphorylation state is regulated by the OPG054 kinase and the OPG106 phosphatase.

It localises to the virion. It is found in the host endoplasmic reticulum-Golgi intermediate compartment membrane. Component of the virion core. Participates in virion assembly. This Vaccinia virus (strain Copenhagen) (VACV) protein is 39kDa core protein OPG130 (OPG130).